The chain runs to 363 residues: Anhydro-N-acetylmuramic acid kinase (363 aa).

10–17 contacts ATP; the sequence is GTSLDGLD.

The protein belongs to the anhydro-N-acetylmuramic acid kinase family.

It catalyses the reaction 1,6-anhydro-N-acetyl-beta-muramate + ATP + H2O = N-acetyl-D-muramate 6-phosphate + ADP + H(+). Its pathway is amino-sugar metabolism; 1,6-anhydro-N-acetylmuramate degradation. The protein operates within cell wall biogenesis; peptidoglycan recycling. Functionally, catalyzes the specific phosphorylation of 1,6-anhydro-N-acetylmuramic acid (anhMurNAc) with the simultaneous cleavage of the 1,6-anhydro ring, generating MurNAc-6-P. Is required for the utilization of anhMurNAc either imported from the medium or derived from its own cell wall murein, and thus plays a role in cell wall recycling. Contributes to intrinsic fosfomycin resistance in P.putida. This Pseudomonas putida (strain ATCC 47054 / DSM 6125 / CFBP 8728 / NCIMB 11950 / KT2440) protein is Anhydro-N-acetylmuramic acid kinase.